We begin with the raw amino-acid sequence, 242 residues long: ATP synthase subunit a (242 aa).

5 helical membrane passes run 21–41 (LSSI…AIIC), 83–103 (AVTL…FSIV), 117–137 (DATV…FYGI), 175–195 (LYGN…LFFN), and 198–218 (AWGW…SIFV).

It belongs to the ATPase A chain family. In terms of assembly, F-type ATPases have 2 components, CF(1) - the catalytic core - and CF(0) - the membrane proton channel. CF(1) has five subunits: alpha(3), beta(3), gamma(1), delta(1), epsilon(1). CF(0) has three main subunits: a(1), b(2) and c(9-12). The alpha and beta chains form an alternating ring which encloses part of the gamma chain. CF(1) is attached to CF(0) by a central stalk formed by the gamma and epsilon chains, while a peripheral stalk is formed by the delta and b chains.

The protein localises to the cell membrane. Its function is as follows. Key component of the proton channel; it plays a direct role in the translocation of protons across the membrane. This is ATP synthase subunit a from Staphylococcus aureus (strain Newman).